We begin with the raw amino-acid sequence, 464 residues long: MSLHFLYYCSEPTLDVKIAFCQGFDKQVDVSYIAKHYNMSKSKVDNQFYSVEVGDSTFTVLKRYQNLKPIGSGAQGIVCAAYDAVLDRNVAIKKLSRPFQNQTHAKRAYRELVLMKCVNHKNIISLLNVFTPQKTLEEFQDVYLVMELMDANLCQVIQMELDHERMSYLLYQMLCGIKHLHSAGIIHRDLKPSNIVVKSDCTLKILDFGLARTAGTSFMMTPYVVTRYYRAPEVILGMGYKENVDIWSVGCIMGEMVRHKILFPGRDYIDQWNKVIEQLGTPCPEFMKKLQPTVRNYVENRPKYAGLTFPKLFPDSLFPADSEHNKLKASQARDLLSKMLVIDPAKRISVDDALQHPYINVWYDPAEVEAPPPQIYDKQLDEREHTIEEWKELIYKEVMNSEEKTKNGVVKGQPSPSGAAVNSSESLPPSSSVNDISSMSTDQTLASDTDSSLEASAGPLGCCR.

One can recognise a Protein kinase domain in the interval 64–359 (YQNLKPIGSG…VDDALQHPYI (296 aa)). ATP is bound by residues 70 to 78 (IGSGAQGIV) and lysine 93. The active-site Proton acceptor is aspartate 189. Threonine 221 is modified (phosphothreonine; by MAP2K7). The short motif at 221–223 (TPY) is the TXY element. Tyrosine 223 carries the phosphotyrosine; by MAP2K4 modification. The segment at 405-464 (TKNGVVKGQPSPSGAAVNSSESLPPSSSVNDISSMSTDQTLASDTDSSLEASAGPLGCCR) is disordered. Over residues 423 to 432 (SSESLPPSSS) the composition is skewed to low complexity. The span at 433 to 454 (VNDISSMSTDQTLASDTDSSLE) shows a compositional bias: polar residues. S-palmitoyl cysteine attachment occurs at residues cysteine 462 and cysteine 463.

Belongs to the protein kinase superfamily. CMGC Ser/Thr protein kinase family. MAP kinase subfamily. In terms of assembly, interacts with MAPKBP1. Interacts with MAPK8IP1/JIP-1 and MAPK8IP3/JIP-3/JSAP1. Interacts with SPAG9/MAPK8IP4/JIP4. Interacts with HDAC9. Interacts with ARRB2; the interaction enhances MAPK10 activation by MAP3K5. Interacts with SARM1. Interacts with JUND; interaction is inhibited in the presence of MEN1. Requires Mg(2+) as cofactor. Post-translationally, dually phosphorylated on Thr-221 and Tyr-223 by MAP2K4 and MAP2K7, which activates the enzyme. MAP2K7 shows a strong preference for Thr-221 while MAP2K4 phosphorylates Tyr-223 preferentially. Weakly autophosphorylated on threonine and tyrosine residues in vitro. Palmitoylation regulates subcellular location and axonal development. As to expression, specific to a subset of neurons in the nervous system. Present in the hippocampus and areas, cerebellum, striatum, brain stem, and weakly in the spinal cord. Very weak expression in testis and kidney.

It localises to the cytoplasm. The protein resides in the membrane. It is found in the nucleus. Its subcellular location is the mitochondrion. It catalyses the reaction L-seryl-[protein] + ATP = O-phospho-L-seryl-[protein] + ADP + H(+). The catalysed reaction is L-threonyl-[protein] + ATP = O-phospho-L-threonyl-[protein] + ADP + H(+). With respect to regulation, activated by threonine and tyrosine phosphorylation by two dual specificity kinases, MAP2K4 and MAP2K7. MAP2K7 phosphorylates MAPK10 on Thr-221 causing a conformational change and a large increase in Vmax. MAP2K4 then phosphorylates Tyr-223 resulting in a further increase in Vmax. Inhibited by dual specificity phosphatases, such as DUSP1. Inhibited by HDAC9. Serine/threonine-protein kinase involved in various processes such as neuronal proliferation, differentiation, migration and programmed cell death. Extracellular stimuli such as pro-inflammatory cytokines or physical stress stimulate the stress-activated protein kinase/c-Jun N-terminal kinase (SAP/JNK) signaling pathway. In this cascade, two dual specificity kinases MAP2K4/MKK4 and MAP2K7/MKK7 phosphorylate and activate MAPK10/JNK3. In turn, MAPK10/JNK3 phosphorylates a number of transcription factors, primarily components of AP-1 such as JUN and ATF2 and thus regulates AP-1 transcriptional activity. Plays regulatory roles in the signaling pathways during neuronal apoptosis. Phosphorylates the neuronal microtubule regulator STMN2. Acts in the regulation of the amyloid-beta precursor protein/APP signaling during neuronal differentiation by phosphorylating APP. Also participates in neurite growth in spiral ganglion neurons. Phosphorylates the CLOCK-BMAL1 heterodimer and plays a role in the photic regulation of the circadian clock. Phosphorylates JUND and this phosphorylation is inhibited in the presence of MEN1. The sequence is that of Mitogen-activated protein kinase 10 (MAPK10) from Homo sapiens (Human).